The sequence spans 145 residues: Plastocyanin, chloroplastic (145 aa).

Residues 1–47 (MKATLRAPASRASAVRPVASLKAAAQRVASVAGVSVASLALTLAAHA) constitute a chloroplast transit peptide. The 98-residue stretch at 48–145 (DATVKLGADS…AGMVGKIIVQ (98 aa)) folds into the Plastocyanin-like domain. Cu cation is bound by residues His-85, Cys-130, His-133, and Met-138.

It belongs to the plastocyanin family. It depends on Cu(2+) as a cofactor.

It is found in the plastid. The protein resides in the chloroplast thylakoid membrane. Its function is as follows. Participates in electron transfer between P700 and the cytochrome b6-f complex in photosystem I. This chain is Plastocyanin, chloroplastic (PETE), found in Chlamydomonas reinhardtii (Chlamydomonas smithii).